The chain runs to 349 residues: Protein-arginine kinase (349 aa).

Residues 24–252 form the Phosphagen kinase C-terminal domain; it reads IVLSSRIRLA…SQIIEQERQA (229 aa). Residues 27–31, His89, Arg123, 174–178, and 205–210 each bind ATP; these read SSRIR, RASVM, and RGIYGE. Positions 335-340 match the RDXXRA motif of the pArg binding pocket involved in allosteric regulation motif; it reads RDIKRA.

Belongs to the ATP:guanido phosphotransferase family.

The enzyme catalyses L-arginyl-[protein] + ATP = N(omega)-phospho-L-arginyl-[protein] + ADP + H(+). Appears to be allosterically activated by the binding of pArg-containing polypeptides to the pArg-binding pocket localized in the C-terminal domain of McsB. Functionally, catalyzes the specific phosphorylation of arginine residues in proteins. The protein is Protein-arginine kinase of Halothermothrix orenii (strain H 168 / OCM 544 / DSM 9562).